Here is a 278-residue protein sequence, read N- to C-terminus: Octanoyl-[GcvH]:protein N-octanoyltransferase (278 aa).

The 206-residue stretch at 44 to 249 folds into the BPL/LPL catalytic domain; the sequence is SQSPPTLRAW…TLQQHGASLL (206 aa). Cys148 serves as the catalytic Acyl-thioester intermediate.

Belongs to the octanoyltransferase LipL family.

The enzyme catalyses N(6)-octanoyl-L-lysyl-[glycine-cleavage complex H protein] + L-lysyl-[lipoyl-carrier protein] = N(6)-octanoyl-L-lysyl-[lipoyl-carrier protein] + L-lysyl-[glycine-cleavage complex H protein]. It functions in the pathway protein modification; protein lipoylation via endogenous pathway; protein N(6)-(lipoyl)lysine from octanoyl-[acyl-carrier-protein]. Functionally, catalyzes the amidotransfer (transamidation) of the octanoyl moiety from octanoyl-GcvH to the lipoyl domain of the E2 subunit of lipoate-dependent enzymes. The protein is Octanoyl-[GcvH]:protein N-octanoyltransferase of Halalkalibacterium halodurans (strain ATCC BAA-125 / DSM 18197 / FERM 7344 / JCM 9153 / C-125) (Bacillus halodurans).